A 473-amino-acid polypeptide reads, in one-letter code: Iron transporter SMF3 (473 aa).

Transmembrane regions (helical) follow at residues phenylalanine 14–serine 34 and threonine 44–valine 64. Asparagine 87 carries N-linked (GlcNAc...) asparagine glycosylation. 9 helical membrane-spanning segments follow: residues alanine 97 to phenylalanine 117, isoleucine 119 to tyrosine 139, phenylalanine 152 to phenylalanine 172, alanine 198 to glycine 218, leucine 257 to glycine 277, leucine 297 to serine 317, leucine 352 to aspartate 372, isoleucine 373 to isoleucine 393, and valine 448 to glycine 468.

It belongs to the NRAMP family.

Its subcellular location is the vacuole membrane. The protein localises to the endoplasmic reticulum membrane. Functionally, has a role in controlling the cellular iron ion levels. Mobilizes vacuolar stores of iron in conditions of low iron levels. The sequence is that of Iron transporter SMF3 (SMF3) from Saccharomyces cerevisiae (strain ATCC 204508 / S288c) (Baker's yeast).